The primary structure comprises 156 residues: 6,7-dimethyl-8-ribityllumazine synthase (156 aa).

Residues tryptophan 33, 64 to 66 (SVE), and 86 to 88 (VIL) each bind 5-amino-6-(D-ribitylamino)uracil. 91–92 (ET) is a (2S)-2-hydroxy-3-oxobutyl phosphate binding site. The Proton donor role is filled by histidine 94. Isoleucine 119 contributes to the 5-amino-6-(D-ribitylamino)uracil binding site. Arginine 133 contributes to the (2S)-2-hydroxy-3-oxobutyl phosphate binding site.

The protein belongs to the DMRL synthase family.

It carries out the reaction (2S)-2-hydroxy-3-oxobutyl phosphate + 5-amino-6-(D-ribitylamino)uracil = 6,7-dimethyl-8-(1-D-ribityl)lumazine + phosphate + 2 H2O + H(+). It participates in cofactor biosynthesis; riboflavin biosynthesis; riboflavin from 2-hydroxy-3-oxobutyl phosphate and 5-amino-6-(D-ribitylamino)uracil: step 1/2. Functionally, catalyzes the formation of 6,7-dimethyl-8-ribityllumazine by condensation of 5-amino-6-(D-ribitylamino)uracil with 3,4-dihydroxy-2-butanone 4-phosphate. This is the penultimate step in the biosynthesis of riboflavin. The chain is 6,7-dimethyl-8-ribityllumazine synthase from Tropheryma whipplei (strain TW08/27) (Whipple's bacillus).